The primary structure comprises 434 residues: MKKWKSSLLGIAIWSLAASSMAAPKELDKVVTLVNDSVILQSDVNAMLQTVRINAAEQNQPLPDDALLTEQVMEKLIIETLQLQQAEQFGIRIDDTRLDQAVAEIAKERELTIPQLQKELEKSGISYSIFREQMRRDMTASEARTIQVRRRINILPQEVEMLAEQLNKQTLQTVQFNISHIQLRVEEGATKEQREETQQQAQQIVDELKNGADFANLAYSYSKGPKALQGGEWGWMRQEEMPTIFADQIKSNGKGAIIGPFRSGVGYHIIKVNDVKGLETVSVTEVNARHILIKTSVILSDDGAKRQLEKARQDILAGRQTFADEAQKLSSDPGSAANGGELGWQTPDLYVPEFKDKIETLPKGTISEPFKTVHGWHIVEVLDRRNVDRTDAAMKNRAYRILFSRKFNEEAQAWLQELRAGAYIEQLGTNDDQG.

Residues methionine 1 to alanine 22 form the signal peptide. PpiC domains follow at residues threonine 173–aspartate 274 and valine 283–aspartate 383.

The protein localises to the periplasm. The enzyme catalyses [protein]-peptidylproline (omega=180) = [protein]-peptidylproline (omega=0). Chaperone involved in the correct folding and assembly of outer membrane proteins. Recognizes specific patterns of aromatic residues and the orientation of their side chains, which are found more frequently in integral outer membrane proteins. May act in both early periplasmic and late outer membrane-associated steps of protein maturation. The protein is Chaperone SurA of Photobacterium profundum (strain SS9).